The chain runs to 388 residues: MKVLTAIALSAIAFTGAVAAVITQEAFLNNPRIHHDQEKYLIELAPYRTRWVTEEEKWALKLDGVNFIDITEEHNTGFYPTLHSASYVKYPPKMQYAEEVAALNKNLSKENMKANLERFTSFHTRYYKSQTGIRSATWLFDQVQRVVSESGAAEYGATVERFSHPWGQFSIIARIPGRTNKTVVLGAHQDSINLFLPSILAAPGADDDGSGTVTILEALRGLLQSDAIAKGNASNTVEFHWYSAEEGGMLGSQAIFSNYKRNRREIKAMLQQDMTGYVQGALNAGVEEAIGIMVDYVDQGLTQFLKDVVTAYCSVGYLETKCGYACSDHTSASKYGYPAAMATEAEMENTNKKIHTTDDKIKYLSFDHMLEHAKLSLGFAFELAFAPF.

The N-terminal stretch at 1-19 is a signal peptide; the sequence is MKVLTAIALSAIAFTGAVA. Positions 20–88 are excised as a propeptide; the sequence is AVITQEAFLN…YPTLHSASYV (69 aa). N-linked (GlcNAc...) asparagine glycosylation is found at Asn-106 and Asn-180. Residues His-188 and Asp-207 each contribute to the Zn(2+) site. A glycan (N-linked (GlcNAc...) asparagine) is linked at Asn-232. 2 residues coordinate Zn(2+): Glu-246 and Asp-273. An intrachain disulfide couples Cys-322 to Cys-326. His-355 serves as a coordination point for Zn(2+).

The protein belongs to the peptidase M28 family. M28E subfamily. As to quaternary structure, monomer. Requires Zn(2+) as cofactor.

The protein resides in the secreted. Extracellular aminopeptidase that allows assimilation of proteinaceous substrates and which contributes to pathogenicity. This chain is Leucine aminopeptidase 1 (lap1), found in Aspergillus fumigatus (strain CBS 144.89 / FGSC A1163 / CEA10) (Neosartorya fumigata).